We begin with the raw amino-acid sequence, 150 residues long: D-aminoacyl-tRNA deacylase (150 aa).

The short motif at 138-139 (GP) is the Gly-cisPro motif, important for rejection of L-amino acids element.

The protein belongs to the DTD family. Homodimer.

It localises to the cytoplasm. It carries out the reaction glycyl-tRNA(Ala) + H2O = tRNA(Ala) + glycine + H(+). The enzyme catalyses a D-aminoacyl-tRNA + H2O = a tRNA + a D-alpha-amino acid + H(+). Its function is as follows. An aminoacyl-tRNA editing enzyme that deacylates mischarged D-aminoacyl-tRNAs. Also deacylates mischarged glycyl-tRNA(Ala), protecting cells against glycine mischarging by AlaRS. Acts via tRNA-based rather than protein-based catalysis; rejects L-amino acids rather than detecting D-amino acids in the active site. By recycling D-aminoacyl-tRNA to D-amino acids and free tRNA molecules, this enzyme counteracts the toxicity associated with the formation of D-aminoacyl-tRNA entities in vivo and helps enforce protein L-homochirality. This Thermosipho melanesiensis (strain DSM 12029 / CIP 104789 / BI429) protein is D-aminoacyl-tRNA deacylase.